We begin with the raw amino-acid sequence, 382 residues long: Na(+)/H(+) antiporter NhaA 2 (382 aa).

A run of 11 helical transmembrane segments spans residues 7–27, 58–78, 94–114, 124–144, 153–173, 178–198, 199–219, 255–275, 291–311, 327–347, and 361–381; these read MVLSETFPGILLIFFTFLALL, LDLWINDGLIAIFFLCIGLEL, SLPIFGALGGMITPALIFAAI, GWAIPTATDIAFAVGILMLLG, LFLLSLAIFDDLGAIVIIALF, LSALAIIICLFCIFALLLLNY, YHITHLSLYVLVGVVLWIAML, NPWVVYFILPLFAFANAGIDI, IILGLFLGKQLGVFTFCFIAI, FYGICILTGIGFTMSLFIDGL, and LAILIASFLSAIVGFIYLKIV.

This sequence belongs to the NhaA Na(+)/H(+) (TC 2.A.33) antiporter family.

The protein resides in the cell inner membrane. It catalyses the reaction Na(+)(in) + 2 H(+)(out) = Na(+)(out) + 2 H(+)(in). Na(+)/H(+) antiporter that extrudes sodium in exchange for external protons. The sequence is that of Na(+)/H(+) antiporter NhaA 2 from Campylobacter jejuni subsp. jejuni serotype O:6 (strain 81116 / NCTC 11828).